Here is a 360-residue protein sequence, read N- to C-terminus: Peptide chain release factor 1 (360 aa).

At Gln-237 the chain carries N5-methylglutamine.

The protein belongs to the prokaryotic/mitochondrial release factor family. In terms of processing, methylated by PrmC. Methylation increases the termination efficiency of RF1.

It is found in the cytoplasm. Functionally, peptide chain release factor 1 directs the termination of translation in response to the peptide chain termination codons UAG and UAA. This chain is Peptide chain release factor 1, found in Saccharophagus degradans (strain 2-40 / ATCC 43961 / DSM 17024).